The primary structure comprises 193 residues: Deoxycytidylate deaminase (193 aa).

One can recognise a CMP/dCMP-type deaminase domain in the interval 1 to 171 (MKASTVLQIA…DILRNAGIEV (171 aa)). Zn(2+)-binding residues include Cys-19, Cys-49, His-94, Glu-102, and His-104. The active-site Proton donor is the Glu-106. Zn(2+)-binding residues include Cys-132 and Cys-135. Substrate is bound at residue Tyr-153.

Belongs to the cytidine and deoxycytidylate deaminase family. As to quaternary structure, homohexamer. The cofactor is Zn(2+).

It carries out the reaction dCMP + H2O + H(+) = dUMP + NH4(+). With respect to regulation, allosteric enzyme whose activity is greatly influenced by the end products of its metabolic pathway, dCTP and dTTP. Supplies the nucleotide substrate for thymidylate synthetase. This Escherichia coli (Bacteriophage T4) protein is Deoxycytidylate deaminase (CD).